The chain runs to 617 residues: Proline--tRNA ligase (617 aa).

The protein belongs to the class-II aminoacyl-tRNA synthetase family. ProS type 1 subfamily. Homodimer.

Its subcellular location is the cytoplasm. It catalyses the reaction tRNA(Pro) + L-proline + ATP = L-prolyl-tRNA(Pro) + AMP + diphosphate. Catalyzes the attachment of proline to tRNA(Pro) in a two-step reaction: proline is first activated by ATP to form Pro-AMP and then transferred to the acceptor end of tRNA(Pro). As ProRS can inadvertently accommodate and process non-cognate amino acids such as alanine and cysteine, to avoid such errors it has two additional distinct editing activities against alanine. One activity is designated as 'pretransfer' editing and involves the tRNA(Pro)-independent hydrolysis of activated Ala-AMP. The other activity is designated 'posttransfer' editing and involves deacylation of mischarged Ala-tRNA(Pro). The misacylated Cys-tRNA(Pro) is not edited by ProRS. In Streptococcus pneumoniae (strain ATCC BAA-255 / R6), this protein is Proline--tRNA ligase.